We begin with the raw amino-acid sequence, 774 residues long: 5-methyltetrahydropteroyltriglutamate--homocysteine methyltransferase (774 aa).

Residues 23–26 (RELK) and Lys123 each bind 5-methyltetrahydropteroyltri-L-glutamate. L-homocysteine is bound by residues 446–448 (IGS) and Glu499. Residues 446–448 (IGS) and Glu499 contribute to the L-methionine site. Residues 530 to 531 (RC) and Trp576 contribute to the 5-methyltetrahydropteroyltri-L-glutamate site. Asp614 contacts L-homocysteine. An L-methionine-binding site is contributed by Asp614. Glu620 provides a ligand contact to 5-methyltetrahydropteroyltri-L-glutamate. Zn(2+) contacts are provided by His656, Cys658, and Glu680. His709 serves as the catalytic Proton donor. Cys741 is a Zn(2+) binding site.

Belongs to the vitamin-B12 independent methionine synthase family. Requires Zn(2+) as cofactor.

It carries out the reaction 5-methyltetrahydropteroyltri-L-glutamate + L-homocysteine = tetrahydropteroyltri-L-glutamate + L-methionine. It participates in amino-acid biosynthesis; L-methionine biosynthesis via de novo pathway; L-methionine from L-homocysteine (MetE route): step 1/1. Functionally, catalyzes the transfer of a methyl group from 5-methyltetrahydrofolate to homocysteine resulting in methionine formation. The polypeptide is 5-methyltetrahydropteroyltriglutamate--homocysteine methyltransferase (Aliivibrio fischeri (strain ATCC 700601 / ES114) (Vibrio fischeri)).